Here is a 79-residue protein sequence, read N- to C-terminus: Cyclin-dependent kinases regulatory subunit 2 (79 aa).

Lys4 bears the N6-acetyllysine mark.

Belongs to the CKS family. In terms of assembly, forms a homohexamer that can probably bind six kinase subunits.

Its function is as follows. Binds to the catalytic subunit of the cyclin dependent kinases and is essential for their biological function. This chain is Cyclin-dependent kinases regulatory subunit 2 (CKS2), found in Bos taurus (Bovine).